The chain runs to 241 residues: UDP-2,3-diacylglucosamine hydrolase (241 aa).

5 residues coordinate Mn(2+): Asp-9, His-11, Asp-42, Asn-79, and His-114. 79–80 (NR) lines the substrate pocket. Substrate contacts are provided by Asp-122, Ser-160, Asn-164, Lys-167, and His-195. The Mn(2+) site is built by His-195 and His-197.

The protein belongs to the LpxH family. It depends on Mn(2+) as a cofactor.

It localises to the cell inner membrane. The catalysed reaction is UDP-2-N,3-O-bis[(3R)-3-hydroxytetradecanoyl]-alpha-D-glucosamine + H2O = 2-N,3-O-bis[(3R)-3-hydroxytetradecanoyl]-alpha-D-glucosaminyl 1-phosphate + UMP + 2 H(+). It participates in glycolipid biosynthesis; lipid IV(A) biosynthesis; lipid IV(A) from (3R)-3-hydroxytetradecanoyl-[acyl-carrier-protein] and UDP-N-acetyl-alpha-D-glucosamine: step 4/6. In terms of biological role, hydrolyzes the pyrophosphate bond of UDP-2,3-diacylglucosamine to yield 2,3-diacylglucosamine 1-phosphate (lipid X) and UMP by catalyzing the attack of water at the alpha-P atom. Involved in the biosynthesis of lipid A, a phosphorylated glycolipid that anchors the lipopolysaccharide to the outer membrane of the cell. The polypeptide is UDP-2,3-diacylglucosamine hydrolase (Shewanella frigidimarina (strain NCIMB 400)).